The following is a 959-amino-acid chain: Glycine dehydrogenase (decarboxylating) (959 aa).

Residue Lys708 is modified to N6-(pyridoxal phosphate)lysine.

Belongs to the GcvP family. In terms of assembly, the glycine cleavage system is composed of four proteins: P, T, L and H. Pyridoxal 5'-phosphate serves as cofactor.

The catalysed reaction is N(6)-[(R)-lipoyl]-L-lysyl-[glycine-cleavage complex H protein] + glycine + H(+) = N(6)-[(R)-S(8)-aminomethyldihydrolipoyl]-L-lysyl-[glycine-cleavage complex H protein] + CO2. Its function is as follows. The glycine cleavage system catalyzes the degradation of glycine. The P protein binds the alpha-amino group of glycine through its pyridoxal phosphate cofactor; CO(2) is released and the remaining methylamine moiety is then transferred to the lipoamide cofactor of the H protein. The protein is Glycine dehydrogenase (decarboxylating) of Yersinia enterocolitica serotype O:8 / biotype 1B (strain NCTC 13174 / 8081).